The following is a 304-amino-acid chain: GTPase Era (304 aa).

An Era-type G domain is found at 9 to 176 (KSGFVSIIGR…LLEITKHLSE (168 aa)). Residues 17-24 (GRPNVGKS) form a G1 region. GTP is bound at residue 17–24 (GRPNVGKS). The G2 stretch occupies residues 43-47 (QTTRN). A G3 region spans residues 64–67 (DTPG). GTP contacts are provided by residues 64–68 (DTPGI) and 126–129 (NKID). The tract at residues 126 to 129 (NKID) is G4. The interval 155–157 (VSA) is G5. One can recognise a KH type-2 domain in the interval 199–285 (IREKVLHLTR…FLELWVKVQK (87 aa)).

Belongs to the TRAFAC class TrmE-Era-EngA-EngB-Septin-like GTPase superfamily. Era GTPase family. In terms of assembly, monomer.

The protein localises to the cytoplasm. Its subcellular location is the cell membrane. An essential GTPase that binds both GDP and GTP, with rapid nucleotide exchange. Plays a role in 16S rRNA processing and 30S ribosomal subunit biogenesis and possibly also in cell cycle regulation and energy metabolism. The chain is GTPase Era from Halalkalibacterium halodurans (strain ATCC BAA-125 / DSM 18197 / FERM 7344 / JCM 9153 / C-125) (Bacillus halodurans).